Here is a 314-residue protein sequence, read N- to C-terminus: Methionyl-tRNA formyltransferase (314 aa).

Residue 111–114 (SLLP) participates in (6S)-5,6,7,8-tetrahydrofolate binding.

It belongs to the Fmt family.

It carries out the reaction L-methionyl-tRNA(fMet) + (6R)-10-formyltetrahydrofolate = N-formyl-L-methionyl-tRNA(fMet) + (6S)-5,6,7,8-tetrahydrofolate + H(+). Its function is as follows. Attaches a formyl group to the free amino group of methionyl-tRNA(fMet). The formyl group appears to play a dual role in the initiator identity of N-formylmethionyl-tRNA by promoting its recognition by IF2 and preventing the misappropriation of this tRNA by the elongation apparatus. The polypeptide is Methionyl-tRNA formyltransferase (Nitrobacter winogradskyi (strain ATCC 25391 / DSM 10237 / CIP 104748 / NCIMB 11846 / Nb-255)).